Consider the following 486-residue polypeptide: Protein nucleotidyltransferase YdiU (486 aa).

G90, G92, R93, K113, D125, G126, R176, and R183 together coordinate ATP. Catalysis depends on D252, which acts as the Proton acceptor. Residues N253 and D262 each contribute to the Mg(2+) site. ATP is bound at residue D262.

It belongs to the SELO family. Mg(2+) serves as cofactor. Requires Mn(2+) as cofactor.

It carries out the reaction L-seryl-[protein] + ATP = 3-O-(5'-adenylyl)-L-seryl-[protein] + diphosphate. The catalysed reaction is L-threonyl-[protein] + ATP = 3-O-(5'-adenylyl)-L-threonyl-[protein] + diphosphate. It catalyses the reaction L-tyrosyl-[protein] + ATP = O-(5'-adenylyl)-L-tyrosyl-[protein] + diphosphate. The enzyme catalyses L-histidyl-[protein] + UTP = N(tele)-(5'-uridylyl)-L-histidyl-[protein] + diphosphate. It carries out the reaction L-seryl-[protein] + UTP = O-(5'-uridylyl)-L-seryl-[protein] + diphosphate. The catalysed reaction is L-tyrosyl-[protein] + UTP = O-(5'-uridylyl)-L-tyrosyl-[protein] + diphosphate. In terms of biological role, nucleotidyltransferase involved in the post-translational modification of proteins. It can catalyze the addition of adenosine monophosphate (AMP) or uridine monophosphate (UMP) to a protein, resulting in modifications known as AMPylation and UMPylation. In Pseudomonas aeruginosa (strain UCBPP-PA14), this protein is Protein nucleotidyltransferase YdiU.